Consider the following 46-residue polypeptide: MLILLNTFAELPEAYKAFAPTVDVLPLIPLFFFLLVFVWQAAVGFK.

Positions 1-9 (MLILLNTFA) are excised as a propeptide. Residues 25 to 45 (LPLIPLFFFLLVFVWQAAVGF) form a helical membrane-spanning segment.

It belongs to the PsbK family. In terms of assembly, PSII is composed of 1 copy each of membrane proteins PsbA, PsbB, PsbC, PsbD, PsbE, PsbF, PsbH, PsbI, PsbJ, PsbK, PsbL, PsbM, PsbT, PsbX, PsbY, Psb30/Ycf12, peripheral proteins PsbO, CyanoQ (PsbQ), PsbU, PsbV and a large number of cofactors. It forms dimeric complexes.

Its subcellular location is the cellular thylakoid membrane. In terms of biological role, one of the components of the core complex of photosystem II (PSII). PSII is a light-driven water:plastoquinone oxidoreductase that uses light energy to abstract electrons from H(2)O, generating O(2) and a proton gradient subsequently used for ATP formation. It consists of a core antenna complex that captures photons, and an electron transfer chain that converts photonic excitation into a charge separation. This is Photosystem II reaction center protein K from Prochlorococcus marinus (strain MIT 9215).